Reading from the N-terminus, the 657-residue chain is Outer dense fiber protein 2 (657 aa).

Residues S73 and S74 each carry the phosphoserine modification. T92 carries the phosphothreonine modification. S95 is modified (phosphoserine; by TSSK4). Phosphoserine is present on residues S106 and S109. Position 110 is a phosphothreonine (T110). S115 and S129 each carry phosphoserine. K138 is covalently cross-linked (Glycyl lysine isopeptide (Lys-Gly) (interchain with G-Cter in SUMO2)). Position 139 is a phosphoserine (S139). Coiled-coil stretches lie at residues 144–423 (QKGE…AEQL) and 461–635 (EIIV…SDLR). T231 is subject to Phosphothreonine. S261 and S632 each carry phosphoserine.

It belongs to the ODF2 family. As to quaternary structure, self-associates. Associates with microtubules and forms a fibrillar structure partially linked to the microtubule network. Interacts via its C-terminus with PLK1. Interacts with ODF1. Interacts with MARK4; the interaction is required for localization of ODF2 to centrioles. Interacts with TSSK4. Interacts with AKNA. Interacts with CFAP58. Interacts with BBOF1. Interacts with CCDC38. Interacts with CCDC42. In terms of processing, tyrosine phosphorylated. Phosphorylated on Ser-95 by TSSK4.

The protein localises to the cytoplasm. Its subcellular location is the cytoskeleton. It is found in the microtubule organizing center. It localises to the centrosome. The protein resides in the cell projection. The protein localises to the cilium. Its subcellular location is the centriole. It is found in the spindle pole. It localises to the flagellum. In terms of biological role, seems to be a major component of sperm tail outer dense fibers (ODF). ODFs are filamentous structures located on the outside of the axoneme in the midpiece and principal piece of the mammalian sperm tail and may help to maintain the passive elastic structures and elastic recoil of the sperm tail. May have a modulating influence on sperm motility. Functions as a general scaffold protein that is specifically localized at the distal/subdistal appendages of mother centrioles. Component of the centrosome matrix required for the localization of PLK1 and NIN to the centrosomes. Required for the formation and/or maintenance of normal CETN1 assembly. This Bos taurus (Bovine) protein is Outer dense fiber protein 2 (ODF2).